Reading from the N-terminus, the 487-residue chain is MSKKWTRNTAAMAAILSALCLSTNALATSEQAVTDENQTTTQQEGMRFEPRNEKFAEAHAEQYKSWKATQESEEIEDALEGDPNMVVLWAGYGFSKDYNKARGHFYAITDVRETLRTGGPTDDKSGPMPMACWSCKSPDVARVIDDRGEDGYFEGKWARLGAEINNAIGCSDCHNTGSEEFAKGGPALQMSRPYAERAMETIGKKFEDQSRFDQQAQVCGQCHVEYYFTGPKKSVKFPWDKGTSVDDMEVYYDEIGFKDWTHGVSKAPMLKAQHPGYETWREGIHGKNNVTCIDCHMPKVQNEDGTVFTDHKVGNPFDRFEDTCAQCHTQTKAALKSVVATRKASVLEMKLRAEKQIIAAHFEAKAAWDAGATEAEMEPILMDIRHAQWRWDYAIASHGVHMHAPEVALRILGTALDKAGDARAKVIRLLATKGITEEIQIPDISTKVKAQQALGMDMNKMNAEKDEFLKTIVPEWDKQADAREAKY.

An N-terminal signal peptide occupies residues 1-27; the sequence is MSKKWTRNTAAMAAILSALCLSTNALA. H104 is a binding site for heme c. The heme site is built by C132, C135, and K136. The heme c site is built by C170, C173, H174, C219, C222, and H223. Ca(2+) is bound by residues E225, Y226, K271, and Q273. Y226 contacts substrate. H274 contributes to the substrate binding site. Residues H285, C292, C295, H296, H311, C324, C327, H328, and H403 each coordinate heme c.

Belongs to the cytochrome c-552 family. Ca(2+) is required as a cofactor. Requires heme c as cofactor.

The protein resides in the periplasm. It carries out the reaction 6 Fe(III)-[cytochrome c] + NH4(+) + 2 H2O = 6 Fe(II)-[cytochrome c] + nitrite + 8 H(+). It functions in the pathway nitrogen metabolism; nitrate reduction (assimilation). Its function is as follows. Catalyzes the reduction of nitrite to ammonia, consuming six electrons in the process. The sequence is that of Cytochrome c-552 from Photobacterium profundum (strain SS9).